Here is a 20-residue protein sequence, read N- to C-terminus: Ranalexin-1Ca (20 aa).

Cysteine 14 and cysteine 20 form a disulfide bridge.

Expressed by the skin glands.

Its subcellular location is the secreted. Antibacterial activity against Gram-positive bacterium S.aureus (MIC=17 uM) and Gram-negative bacterium E.coli (MIC=4 uM). Has activity against C.albicans (MIC=14 uM). The sequence is that of Ranalexin-1Ca from Lithobates clamitans (Green frog).